Reading from the N-terminus, the 364-residue chain is FMNH(2)-dependent dimethylsulfone monooxygenase (364 aa).

It belongs to the SsuD family.

The catalysed reaction is dimethyl sulfone + FMNH2 + O2 = methanesulfinate + FMN + formaldehyde + H2O + 2 H(+). Involved in the dimethyl sulfide degradation pathway. Catalyzes the oxidation of dimethylsulfone (DMSO2) to yield methanesulfinate, which is oxidized spontaneously to methanesulfonate in the presence of dioxygen and FMNH(2). The sequence is that of FMNH(2)-dependent dimethylsulfone monooxygenase from Pseudomonas fluorescens (strain Pf0-1).